The sequence spans 158 residues: Transcription elongation factor GreA (158 aa).

The protein belongs to the GreA/GreB family.

Functionally, necessary for efficient RNA polymerase transcription elongation past template-encoded arresting sites. The arresting sites in DNA have the property of trapping a certain fraction of elongating RNA polymerases that pass through, resulting in locked ternary complexes. Cleavage of the nascent transcript by cleavage factors such as GreA or GreB allows the resumption of elongation from the new 3'terminus. GreA releases sequences of 2 to 3 nucleotides. This chain is Transcription elongation factor GreA, found in Rhizobium leguminosarum bv. trifolii (strain WSM2304).